The following is a 68-amino-acid chain: Large ribosomal subunit protein uL29 (68 aa).

This sequence belongs to the universal ribosomal protein uL29 family.

In Archaeoglobus fulgidus (strain ATCC 49558 / DSM 4304 / JCM 9628 / NBRC 100126 / VC-16), this protein is Large ribosomal subunit protein uL29 (rpl29).